Consider the following 704-residue polypeptide: Polyribonucleotide nucleotidyltransferase (704 aa).

Mg(2+)-binding residues include D487 and D493. Positions P554 to I613 constitute a KH domain. The region spanning G623 to K691 is the S1 motif domain.

The protein belongs to the polyribonucleotide nucleotidyltransferase family. Component of the RNA degradosome, which is a multiprotein complex involved in RNA processing and mRNA degradation. Mg(2+) is required as a cofactor.

The protein resides in the cytoplasm. The enzyme catalyses RNA(n+1) + phosphate = RNA(n) + a ribonucleoside 5'-diphosphate. Functionally, involved in mRNA degradation. Catalyzes the phosphorolysis of single-stranded polyribonucleotides processively in the 3'- to 5'-direction. This chain is Polyribonucleotide nucleotidyltransferase, found in Xanthomonas oryzae pv. oryzae (strain MAFF 311018).